An 80-amino-acid polypeptide reads, in one-letter code: Small ribosomal subunit protein uS17 (80 aa).

This sequence belongs to the universal ribosomal protein uS17 family. As to quaternary structure, part of the 30S ribosomal subunit.

Functionally, one of the primary rRNA binding proteins, it binds specifically to the 5'-end of 16S ribosomal RNA. In Brucella abortus (strain S19), this protein is Small ribosomal subunit protein uS17.